We begin with the raw amino-acid sequence, 601 residues long: Proteasome-associated ATPase (601 aa).

Residues 1–15 (MSGPRSGSGSGGSTG) show a composition bias toward gly residues. The disordered stretch occupies residues 1–29 (MSGPRSGSGSGGSTGRPGDADSQRSAYEK). The span at 18–29 (GDADSQRSAYEK) shows a compositional bias: basic and acidic residues. The stretch at 19–106 (DADSQRSAYE…LKEEVDRLAQ (88 aa)) forms a coiled coil. 289 to 294 (GCGKTL) contacts ATP. The segment at 600-601 (YL) is docks into pockets in the proteasome alpha-ring.

The protein belongs to the AAA ATPase family. As to quaternary structure, homohexamer. Assembles into a hexameric ring structure that caps the 20S proteasome core. Strongly interacts with the prokaryotic ubiquitin-like protein Pup through a hydrophobic interface; the interacting region of ARC lies in its N-terminal coiled-coil domain. There is one Pup binding site per ARC hexamer ring. Upon ATP-binding, the C-terminus of ARC interacts with the alpha-rings of the proteasome core, possibly by binding to the intersubunit pockets.

The protein operates within protein degradation; proteasomal Pup-dependent pathway. ATPase which is responsible for recognizing, binding, unfolding and translocation of pupylated proteins into the bacterial 20S proteasome core particle. May be essential for opening the gate of the 20S proteasome via an interaction with its C-terminus, thereby allowing substrate entry and access to the site of proteolysis. Thus, the C-termini of the proteasomal ATPase may function like a 'key in a lock' to induce gate opening and therefore regulate proteolysis. The protein is Proteasome-associated ATPase of Parafrankia sp. (strain EAN1pec).